The primary structure comprises 340 residues: Insulin gene enhancer protein ISL-2B (340 aa).

2 consecutive LIM zinc-binding domains span residues 9–62 and 71–125; these read CVGC…CKRD and CAKC…RADH. Positions 172 to 231 form a DNA-binding region, homeobox; the sequence is TTRVRTVLNEKQLHTLRTCYNANPRPDALMKEQLVEMTGLSPRVIRVWFQNKRCKDKKRT. Positions 307–317 are enriched in low complexity; the sequence is ESGSMGNSSGS. A disordered region spans residues 307-340; that stretch reads ESGSMGNSSGSDVTSLSSQLPDTPNSMVPSPMDT. Over residues 318–340 the composition is skewed to polar residues; it reads DVTSLSSQLPDTPNSMVPSPMDT.

The protein localises to the nucleus. In terms of biological role, binds to one of the cis-acting domain of the insulin gene enhancer. May be involved in subtype specialization of primary motoneurons. This Oncorhynchus tshawytscha (Chinook salmon) protein is Insulin gene enhancer protein ISL-2B (isl2b).